Consider the following 258-residue polypeptide: U6 snRNA phosphodiesterase 1 (258 aa).

The interval 1–20 (MALVDYGGSSSSASEDEDCT) is disordered. His117 serves as the catalytic Proton acceptor. Residues 117–119 (HLS), Tyr200, and 202–208 (PASFHVS) contribute to the AMP site. UMP-binding positions include Tyr200 and 204–208 (SFHVS). Catalysis depends on His206, which acts as the Proton donor.

The protein belongs to the 2H phosphoesterase superfamily. USB1 family.

Its subcellular location is the nucleus. It carries out the reaction a 3'-end uridylyl-uridine-RNA = a 3'-end 2',3'-cyclophospho-uridine-RNA + uridine. 3'-5' RNA exonuclease that trims the 3' end of oligo(U) tracts of the pre-U6 small nuclear RNA (snRNA) molecule, leading to the formation of a mature U6 snRNA 3' end-terminated with a 2',3'-cyclic phosphate. Participates in the U6 snRNA 3' end processing that prevents U6 snRNA degradation. In Drosophila melanogaster (Fruit fly), this protein is U6 snRNA phosphodiesterase 1.